The chain runs to 338 residues: Phenylalanine--tRNA ligase alpha subunit (338 aa).

Mg(2+) is bound at residue Glu-252.

This sequence belongs to the class-II aminoacyl-tRNA synthetase family. Phe-tRNA synthetase alpha subunit type 1 subfamily. In terms of assembly, tetramer of two alpha and two beta subunits. The cofactor is Mg(2+).

It localises to the cytoplasm. It carries out the reaction tRNA(Phe) + L-phenylalanine + ATP = L-phenylalanyl-tRNA(Phe) + AMP + diphosphate + H(+). The polypeptide is Phenylalanine--tRNA ligase alpha subunit (Pseudomonas fluorescens (strain Pf0-1)).